A 321-amino-acid polypeptide reads, in one-letter code: Glucokinase (321 aa).

ATP is bound at residue 8 to 13; it reads GDVGGT.

It belongs to the bacterial glucokinase family.

Its subcellular location is the cytoplasm. It catalyses the reaction D-glucose + ATP = D-glucose 6-phosphate + ADP + H(+). This Psychromonas ingrahamii (strain DSM 17664 / CCUG 51855 / 37) protein is Glucokinase.